A 218-amino-acid polypeptide reads, in one-letter code: Large ribosomal subunit protein bL25 (218 aa).

It belongs to the bacterial ribosomal protein bL25 family. CTC subfamily. In terms of assembly, part of the 50S ribosomal subunit; part of the 5S rRNA/L5/L18/L25 subcomplex. Contacts the 5S rRNA. Binds to the 5S rRNA independently of L5 and L18.

This is one of the proteins that binds to the 5S RNA in the ribosome where it forms part of the central protuberance. This Gluconobacter oxydans (strain 621H) (Gluconobacter suboxydans) protein is Large ribosomal subunit protein bL25.